The following is a 414-amino-acid chain: Gamma-glutamyl phosphate reductase (414 aa).

This sequence belongs to the gamma-glutamyl phosphate reductase family.

The protein localises to the cytoplasm. It catalyses the reaction L-glutamate 5-semialdehyde + phosphate + NADP(+) = L-glutamyl 5-phosphate + NADPH + H(+). It functions in the pathway amino-acid biosynthesis; L-proline biosynthesis; L-glutamate 5-semialdehyde from L-glutamate: step 2/2. In terms of biological role, catalyzes the NADPH-dependent reduction of L-glutamate 5-phosphate into L-glutamate 5-semialdehyde and phosphate. The product spontaneously undergoes cyclization to form 1-pyrroline-5-carboxylate. The polypeptide is Gamma-glutamyl phosphate reductase (Clostridium botulinum (strain Alaska E43 / Type E3)).